Reading from the N-terminus, the 189-residue chain is Apolipoprotein D (189 aa).

The signal sequence occupies residues 1–20 (MVTMLMFLATLAGLFTTAKG). Glutamine 21 is subject to Pyrrolidone carboxylic acid. Cystine bridges form between cysteine 28–cysteine 134 and cysteine 61–cysteine 185. Residues asparagine 65 and asparagine 98 are each glycosylated (N-linked (GlcNAc...) asparagine).

This sequence belongs to the calycin superfamily. Lipocalin family. Homodimer. As to expression, highest levels of expression in brain, testis, virgin mammary gland and salivary gland. Moderate levels in skeletal muscle, lactating mammary gland and thymus. Low levels in lung and lymph node. No expression in kidney, pancreas, liver or spleen.

It localises to the secreted. Its function is as follows. APOD occurs in the macromolecular complex with lecithin-transport and binding of bilin. Appears to be able to transport a variety of ligands in a number of different contexts. This Mus musculus (Mouse) protein is Apolipoprotein D (Apod).